Consider the following 328-residue polypeptide: tRNA U34 carboxymethyltransferase (328 aa).

Carboxy-S-adenosyl-L-methionine contacts are provided by residues Lys91, Trp105, Lys110, Gly130, 181-182 (IE), Met196, Tyr200, and Arg315.

This sequence belongs to the class I-like SAM-binding methyltransferase superfamily. CmoB family. As to quaternary structure, homotetramer.

It carries out the reaction carboxy-S-adenosyl-L-methionine + 5-hydroxyuridine(34) in tRNA = 5-carboxymethoxyuridine(34) in tRNA + S-adenosyl-L-homocysteine + H(+). Functionally, catalyzes carboxymethyl transfer from carboxy-S-adenosyl-L-methionine (Cx-SAM) to 5-hydroxyuridine (ho5U) to form 5-carboxymethoxyuridine (cmo5U) at position 34 in tRNAs. This chain is tRNA U34 carboxymethyltransferase, found in Pectobacterium carotovorum subsp. carotovorum (strain PC1).